We begin with the raw amino-acid sequence, 158 residues long: Cyclic pyranopterin monophosphate synthase (158 aa).

Residues 74–76 (MCH) and 112–113 (ME) contribute to the substrate site. The active site involves Asp127.

It belongs to the MoaC family. As to quaternary structure, homohexamer; trimer of dimers.

The catalysed reaction is (8S)-3',8-cyclo-7,8-dihydroguanosine 5'-triphosphate = cyclic pyranopterin phosphate + diphosphate. It participates in cofactor biosynthesis; molybdopterin biosynthesis. In terms of biological role, catalyzes the conversion of (8S)-3',8-cyclo-7,8-dihydroguanosine 5'-triphosphate to cyclic pyranopterin monophosphate (cPMP). The chain is Cyclic pyranopterin monophosphate synthase from Helicobacter pylori (strain Shi470).